Consider the following 1530-residue polypeptide: Coiled-coil domain-containing protein 141 (1530 aa).

The Spectrin repeat unit spans residues 49–127 (NLLEIGSSQD…SMLERRRELL (79 aa)). At Thr91 the chain carries Phosphothreonine. Coiled coils occupy residues 220–251 (IDSL…VLQL), 758–785 (LKEK…YEEI), and 865–967 (AKSL…VNKK). 4 disordered regions span residues 1153-1240 (SEER…PASS), 1259-1285 (LGKA…DTFT), 1324-1356 (PREV…SNVT), and 1369-1403 (SPGL…SVVS). The segment covering 1334-1345 (PSSQAQEISLGT) has biased composition (polar residues). One can recognise an Ig-like domain in the interval 1409–1497 (PHFSRLLSNV…GTLSSKAILH (89 aa)).

As to quaternary structure, interacts with DISC1. Interacts preferentially with phosphorylated forms of myosin regulatory light chain (MRLC). Interacts (via the N-terminal region) with HDAC6; inhibits the deacetylase activity of HDAC6. Interacts with KIBRA (via the C-terminal region); retains AMPAR in the cytosol after internalization. Ubiquitinated and degradated by the CDC20-APC/C pathway. During brain development, CDC20-APC/C complex degrades CCDC141 after centrosome translocation into the dilated area. CCDC141 is restabilized in the dilation until the centrosome enters the dilation, at which point it is once again immediately destabilized by CDC20-APC/C complex. The oscillatory regulation of CCDC141 protein is needed for proper cortical migration. Post-translationally, phosphorylation at Thr-91 by PLK1 affects CCDC141 degradation.

The protein resides in the cytoplasm. It localises to the cytoskeleton. Its subcellular location is the microtubule organizing center. It is found in the centrosome. Plays a critical role in cortical radial and GnRH neurons migration during brain development. Regulates cortical radial migration by negatively controlling the activity of histone deacetylase 6 (HDAC6) and promotes centrosome maturation. CAMDI is required for dilation formation of cortical neurons during radial migration. Plays a critical role in learning and memory performance through regulation of AMPA-selective glutamate receptors (AMPARs) cell surface expression in competition with KIBRA. This chain is Coiled-coil domain-containing protein 141, found in Rattus norvegicus (Rat).